A 1292-amino-acid chain; its full sequence is MYNNYNLCHIRTINWEEIITGPSAMYSYVYNFTSPERACTPCDKSCEQGCWGEGPENCQKYSKTNCSPQCWQGRCFGPNPRECCHLFCAGGCTGPKQSDCIACKNFFDDGVCTQECPPMQKYNPTTYSWEPNPDGKYAYGATCVRRCPEHLLKDNGACVRSCPPKKKALNGECVPCDGPCPKTCKGVEKVHSGNIDSFKDCTIIEGSITILDQSFQGFQHVYRNFSFGKRYEKMHPDKLEVFSTLKEITGFLNIQGDHKDFKNLSYFRNLEVIGGRTLTEYFASLYVVKTSLVSFGLSSLKKIYSGSIAILENKNLCYAQSINWTRIKKSSEHESLLSNNRNESECIKDGLVCDEQCSDEGCWGPGPAQCLSCKNFILGNDCLQDCTAPGIYQADEKTCKVCHEECDGSCIGPNTDHCKKCKHARDGPFCVPECPASKYNDNGVCKSCHGNCVGGCEGPENNIGPNGCHSCDKAILNDHVPEGCLQKKESCPDGYYYEWVSPLEQGPLKPLASKAVCRKCHSRCKKCTGYGFHEHVCQECTKYKRGEQCEDECPADYFADANKLCIPCFSECRGCFGPGPNQCYKCRNYKIYIDEDTDGNTTSFNCTETCTPEYPHKIFNPDSEPYCSLETAGLIENELQPAILAGVAVFALAFLVVAAIIMYFWRVRAKAKENTVKMTMALTGLDDNEPLRPTGVKPNLAKLRIIKEEEMRKGGILGYGAFGNVYKGVWVPEGENVKIPVAIKVLHDGTGANTSKEFLDEAYIMASVEHPNLLQLLAVCMTSQMMLVTQLMPLGCLLDFVRRFKDKIGSKALLNWCTQIARGMAYLEERRLVHRDLAARNVLVQTPNCVKITDFGLAKLLDINEEQYKAAGGKMPIKWLALECIQHRVFTHKSDVWAFGVTIWEVLTYGGRPYENVPARNVPELLEKGERLPQPAICTIDVYMIMIKCWMLDAESRPSFKELAEDFAKMSRDPGRYLAIKGDKYMRLPSYTLQDEKEMIRNLASAMDGPEALVDADEYLQPKSRAPIPPGLSASSTSGSPPNTPVKPCWPNGKPLAADSPTPQNQQNWDRELLRYGANHRNGNVSSHEPGNSAQHGHYTPPNGHCGHVVGSDSTASRYCSDPLKMIDVRDCDVTDDCFDGEVNSAHQQAQVGNLKLDLPLDEDDYLMPSPQLPTNTTQYMDLIGDSKPTEMEPKRVNNGYRKYPEFLTIQGKTSLDNPEYIMSQDEGPLTPQTIGIPTPDLEKVLTNGTFGSQVRQRSSEEESDHEYYNDFDRLERELQPLKPLRKNETTV.

Residues 1–641 (MYNNYNLCHI…AGLIENELQP (641 aa)) lie on the Extracellular side of the membrane. N-linked (GlcNAc...) asparagine glycans are attached at residues asparagine 31, asparagine 224, asparagine 263, asparagine 323, asparagine 342, asparagine 600, and asparagine 605. A helical transmembrane segment spans residues 642 to 662 (AILAGVAVFALAFLVVAAIIM). Residues 663–1292 (YFWRVRAKAK…KPLRKNETTV (630 aa)) are Cytoplasmic-facing. Threonine 675 carries the post-translational modification Phosphothreonine; by PKC. One can recognise a Protein kinase domain in the interval 711–978 (MRKGGILGYG…KMSRDPGRYL (268 aa)). ATP is bound by residues 717–725 (LGYGAFGNV) and lysine 744. Residue aspartate 836 is the Proton acceptor of the active site. Residues 1022-1066 (PKSRAPIPPGLSASSTSGSPPNTPVKPCWPNGKPLAADSPTPQNQ) are disordered. A Phosphotyrosine; by autocatalysis modification is found at tyrosine 1166. The segment at 1253–1292 (SQVRQRSSEEESDHEYYNDFDRLERELQPLKPLRKNETTV) is disordered. Basic and acidic residues predominate over residues 1258–1292 (RSSEEESDHEYYNDFDRLERELQPLKPLRKNETTV).

It belongs to the protein kinase superfamily. Tyr protein kinase family. EGF receptor subfamily.

It is found in the membrane. The enzyme catalyses L-tyrosyl-[protein] + ATP = O-phospho-L-tyrosyl-[protein] + ADP + H(+). Its activity is regulated as follows. Activated by MRJP1 during queen determination of honeybee larvae. Its function is as follows. Upon binding to its ligands, transduces the signal through the ras-raf-MAPK pathway and is involved in a myriad of developmental decisions. Involved in the determination of adult size, ovary development, and development timing, especially during queen determination of honeybee larvae. May have an important role in the prolongation of longevity in queens. This is Epidermal growth factor receptor (Egfr) from Apis mellifera (Honeybee).